The following is a 302-amino-acid chain: Syntaxin-17 (302 aa).

Ser-2 carries the post-translational modification N-acetylserine. The Cytoplasmic segment spans residues 2-228; that stretch reads SEDEEKVKLR…KNLGKAAKYK (227 aa). Lys-41 is subject to N6-acetyllysine. A coiled-coil region spans residues 53 to 123; that stretch reads EEHINAGRTV…EELKKQFNDE (71 aa). At Tyr-157 the chain carries Phosphotyrosine; by ABL1. The 63-residue stretch at 162–224 folds into the t-SNARE coiled-coil homology domain; the sequence is IPRDQNAAES…EEGTKNLGKA (63 aa). Residues 229 to 249 form a helical membrane-spanning segment; that stretch reads LAALPVAGALIGGVVGGPIGL. The interval 229 to 275 is necessary and sufficient for localization to autophagosome; it reads LAALPVAGALIGGVVGGPIGLLAGFKVAGIAAALGGGVLGFTGGKLI. Residues 250–254 lie on the Lumenal side of the membrane; it reads LAGFK. The chain crosses the membrane as a helical span at residues 255 to 275; it reads VAGIAAALGGGVLGFTGGKLI. Residues 276–302 are Cytoplasmic-facing; sequence QRRKQKMMEKLASSCPDLPSQTDKKCS. Position 289 is a phosphoserine (Ser-289). The Endoplasmic reticulum retention signal motif lies at 299–302; it reads KKCS.

It belongs to the syntaxin family. Forms a SNARE complex composed of VAMP8, SNAP29 and STX17 involved in fusion of autophagosome with lysosome. May interact with VTI1B. Probably interacts with BET1, SCFD1 and SEC22B. Interacts with PTPN2 and ABL1; involved in STX17 phosphorylation. Interacts with COPB1. Interacts with TMED9 and TMED10; the interaction is direct. Interacts with VAMP7. Interacts with RUBCNL/PACER; promoting targeting of RUBCNL/PACER to autophagosome. Interacts with VAMP8, SNAP29, VPS39 and VPS41; these interactions are increased in the absence of TMEM39A. Interacts with IRGM; promoting STX17 recruitment to autophagosomes. Interacts with ATG8 proteins GABARAP and MAP1LC3B. Interacts with RNF115; this interaction enhances STX17 stability which in turn promotes autophagosome maturation. Interacts with RAB39A (GTP-bound); the interaction promotes autophagosome-lysosome membrane fusion driven by STX17-SNAP29-VAMP8. Interacts with RAB39B; the interaction may promote a different fonction in autophagy as compared with RAB39A. Post-translationally, phosphorylated at Tyr-157 probably by ABL1. Dephosphorylation by PTPN2; regulates exit from the endoplasmic reticulum.

The protein localises to the endoplasmic reticulum membrane. It is found in the smooth endoplasmic reticulum membrane. It localises to the endoplasmic reticulum-Golgi intermediate compartment membrane. Its subcellular location is the cytoplasmic vesicle. The protein resides in the autophagosome membrane. The protein localises to the COPII-coated vesicle membrane. It is found in the cytoplasm. It localises to the cytosol. Its subcellular location is the mitochondrion membrane. The protein resides in the autolysosome membrane. SNAREs, soluble N-ethylmaleimide-sensitive factor-attachment protein receptors, are essential proteins for fusion of cellular membranes. SNAREs localized on opposing membranes assemble to form a trans-SNARE complex, an extended, parallel four alpha-helical bundle that drives membrane fusion. STX17 is a SNARE of the autophagosome involved in autophagy through the direct control of autophagosome membrane fusion with the lysosome membrane. May also play a role in the early secretory pathway where it may maintain the architecture of the endoplasmic reticulum-Golgi intermediate compartment/ERGIC and Golgi and/or regulate transport between the endoplasmic reticulum, the ERGIC and the Golgi. This chain is Syntaxin-17, found in Bos taurus (Bovine).